The primary structure comprises 169 residues: 2-C-methyl-D-erythritol 2,4-cyclodiphosphate synthase (169 aa).

D13 and H15 together coordinate a divalent metal cation. 4-CDP-2-C-methyl-D-erythritol 2-phosphate-binding positions include 13 to 15 (DVH) and 39 to 40 (HS). H47 is an a divalent metal cation binding site. 4-CDP-2-C-methyl-D-erythritol 2-phosphate-binding positions include 61-63 (DIG), 66-70 (FPDTD), F144, and R147.

Belongs to the IspF family. In terms of assembly, homotrimer. A divalent metal cation serves as cofactor.

It catalyses the reaction 4-CDP-2-C-methyl-D-erythritol 2-phosphate = 2-C-methyl-D-erythritol 2,4-cyclic diphosphate + CMP. It participates in isoprenoid biosynthesis; isopentenyl diphosphate biosynthesis via DXP pathway; isopentenyl diphosphate from 1-deoxy-D-xylulose 5-phosphate: step 4/6. Functionally, involved in the biosynthesis of isopentenyl diphosphate (IPP) and dimethylallyl diphosphate (DMAPP), two major building blocks of isoprenoid compounds. Catalyzes the conversion of 4-diphosphocytidyl-2-C-methyl-D-erythritol 2-phosphate (CDP-ME2P) to 2-C-methyl-D-erythritol 2,4-cyclodiphosphate (ME-CPP) with a corresponding release of cytidine 5-monophosphate (CMP). The protein is 2-C-methyl-D-erythritol 2,4-cyclodiphosphate synthase of Cupriavidus pinatubonensis (strain JMP 134 / LMG 1197) (Cupriavidus necator (strain JMP 134)).